The primary structure comprises 547 residues: Apolipoprotein N-acyltransferase (547 aa).

6 consecutive transmembrane segments (helical) span residues P31–A51, G65–H85, G89–F109, A144–L164, L181–L201, and L215–W235. A CN hydrolase domain is found at V248 to G511. E292 functions as the Proton acceptor in the catalytic mechanism. K366 is a catalytic residue. C416 serves as the catalytic Nucleophile.

This sequence belongs to the CN hydrolase family. Apolipoprotein N-acyltransferase subfamily.

It is found in the cell inner membrane. The enzyme catalyses N-terminal S-1,2-diacyl-sn-glyceryl-L-cysteinyl-[lipoprotein] + a glycerophospholipid = N-acyl-S-1,2-diacyl-sn-glyceryl-L-cysteinyl-[lipoprotein] + a 2-acyl-sn-glycero-3-phospholipid + H(+). The protein operates within protein modification; lipoprotein biosynthesis (N-acyl transfer). In terms of biological role, catalyzes the phospholipid dependent N-acylation of the N-terminal cysteine of apolipoprotein, the last step in lipoprotein maturation. This is Apolipoprotein N-acyltransferase from Bordetella bronchiseptica (strain ATCC BAA-588 / NCTC 13252 / RB50) (Alcaligenes bronchisepticus).